Reading from the N-terminus, the 347-residue chain is UDP-3-O-acylglucosamine N-acyltransferase 1 (347 aa).

The active-site Proton acceptor is histidine 246.

Belongs to the transferase hexapeptide repeat family. LpxD subfamily. In terms of assembly, homotrimer.

The enzyme catalyses a UDP-3-O-[(3R)-3-hydroxyacyl]-alpha-D-glucosamine + a (3R)-hydroxyacyl-[ACP] = a UDP-2-N,3-O-bis[(3R)-3-hydroxyacyl]-alpha-D-glucosamine + holo-[ACP] + H(+). Its pathway is bacterial outer membrane biogenesis; LPS lipid A biosynthesis. Catalyzes the N-acylation of UDP-3-O-acylglucosamine using 3-hydroxyacyl-ACP as the acyl donor. Is involved in the biosynthesis of lipid A, a phosphorylated glycolipid that anchors the lipopolysaccharide to the outer membrane of the cell. The sequence is that of UDP-3-O-acylglucosamine N-acyltransferase 1 from Francisella tularensis subsp. holarctica (strain LVS).